Reading from the N-terminus, the 629-residue chain is Glutamyl-tRNA(Gln) amidotransferase subunit E (629 aa).

The disordered stretch occupies residues 405-426; that stretch reads PEETRRALPDGNTQYMRPLPGK.

Belongs to the GatB/GatE family. GatE subfamily. Heterodimer of GatD and GatE.

The enzyme catalyses L-glutamyl-tRNA(Gln) + L-glutamine + ATP + H2O = L-glutaminyl-tRNA(Gln) + L-glutamate + ADP + phosphate + H(+). Its function is as follows. Allows the formation of correctly charged Gln-tRNA(Gln) through the transamidation of misacylated Glu-tRNA(Gln) in organisms which lack glutaminyl-tRNA synthetase. The reaction takes place in the presence of glutamine and ATP through an activated gamma-phospho-Glu-tRNA(Gln). The GatDE system is specific for glutamate and does not act on aspartate. This is Glutamyl-tRNA(Gln) amidotransferase subunit E from Thermococcus sibiricus (strain DSM 12597 / MM 739).